The following is an 80-amino-acid chain: Cell division protein ZapB (80 aa).

Residues 3–80 (FEVFEKLEAK…ALLGKMEDVQ (78 aa)) adopt a coiled-coil conformation.

This sequence belongs to the ZapB family. Homodimer. The ends of the coiled-coil dimer bind to each other, forming polymers. Interacts with FtsZ.

It localises to the cytoplasm. Functionally, non-essential, abundant cell division factor that is required for proper Z-ring formation. It is recruited early to the divisome by direct interaction with FtsZ, stimulating Z-ring assembly and thereby promoting cell division earlier in the cell cycle. Its recruitment to the Z-ring requires functional FtsA or ZipA. The chain is Cell division protein ZapB from Photorhabdus laumondii subsp. laumondii (strain DSM 15139 / CIP 105565 / TT01) (Photorhabdus luminescens subsp. laumondii).